The sequence spans 231 residues: Histidine biosynthesis bifunctional protein HisIE (231 aa).

Residues 1 to 130 form a phosphoribosyl-AMP cyclohydrolase region; the sequence is MQDVFRQIDW…QKYPIGVYHI (130 aa). Residues 131–231 are phosphoribosyl-ATP pyrophosphohydrolase; it reads LDDLYHIIEQ…GIEEKASRKH (101 aa).

In the N-terminal section; belongs to the PRA-CH family. This sequence in the C-terminal section; belongs to the PRA-PH family.

The protein resides in the cytoplasm. The catalysed reaction is 1-(5-phospho-beta-D-ribosyl)-ATP + H2O = 1-(5-phospho-beta-D-ribosyl)-5'-AMP + diphosphate + H(+). The enzyme catalyses 1-(5-phospho-beta-D-ribosyl)-5'-AMP + H2O = 1-(5-phospho-beta-D-ribosyl)-5-[(5-phospho-beta-D-ribosylamino)methylideneamino]imidazole-4-carboxamide. It functions in the pathway amino-acid biosynthesis; L-histidine biosynthesis; L-histidine from 5-phospho-alpha-D-ribose 1-diphosphate: step 2/9. It participates in amino-acid biosynthesis; L-histidine biosynthesis; L-histidine from 5-phospho-alpha-D-ribose 1-diphosphate: step 3/9. The chain is Histidine biosynthesis bifunctional protein HisIE from Helicobacter hepaticus (strain ATCC 51449 / 3B1).